Here is a 318-residue protein sequence, read N- to C-terminus: Ribosomal RNA small subunit methyltransferase H (318 aa).

S-adenosyl-L-methionine-binding positions include 35–37 (GGH), D54, F83, D104, and Q111.

Belongs to the methyltransferase superfamily. RsmH family.

It localises to the cytoplasm. The enzyme catalyses cytidine(1402) in 16S rRNA + S-adenosyl-L-methionine = N(4)-methylcytidine(1402) in 16S rRNA + S-adenosyl-L-homocysteine + H(+). Its function is as follows. Specifically methylates the N4 position of cytidine in position 1402 (C1402) of 16S rRNA. In Latilactobacillus sakei subsp. sakei (strain 23K) (Lactobacillus sakei subsp. sakei), this protein is Ribosomal RNA small subunit methyltransferase H.